The chain runs to 327 residues: G-protein coupled receptor 55 (327 aa).

Residues Met1–Thr20 are Extracellular-facing. A glycan (N-linked (GlcNAc...) asparagine) is linked at Asn8. The chain crosses the membrane as a helical span at residues Leu21–Ile41. Topologically, residues Arg42–Ala57 are cytoplasmic. Residues Thr58–Phe78 traverse the membrane as a helical segment. Residues Lys79–Cys93 are Extracellular-facing. A helical transmembrane segment spans residues Thr94 to Ile114. The Cytoplasmic segment spans residues Ser115 to Lys136. The helical transmembrane segment at Thr137–Thr157 threads the bilayer. Residues Phe158–Ser179 are Extracellular-facing. N-linked (GlcNAc...) asparagine glycosylation occurs at Asn170. A helical membrane pass occupies residues Val180–Ser200. Residues Tyr201–Asn239 are Cytoplasmic-facing. The helical transmembrane segment at Leu240–Val260 threads the bilayer. Over Arg261 to Gln279 the chain is Extracellular. Residues Leu280–Ile300 traverse the membrane as a helical segment. At Lys301–Gly327 the chain is on the cytoplasmic side.

This sequence belongs to the G-protein coupled receptor 1 family. In terms of tissue distribution, highly expressed in splenic plasma cells.

The protein localises to the cell membrane. G-protein coupled receptor that binds to several ligands including 2-arachidonoyl lysophosphatidylinositol or lysophosphatidylglucoside with high affinity, leading to rapid and transient activation of numerous intracellular signaling pathways. Induces the Ca(2+) release from intracellular stores via ERK, the heterotrimeric G protein GNA13 and RHOA leading to morphological changes including cell rounding and stress fiber formation. In macrophages, acts downstream of lysophosphatidylglucoside to inhibit the translocation of the phospholipid-transporting ABCA1 to plasma membrane and subsequent cholesterol efflux leading to lipid accumulation and foam cell formation. May be involved in hyperalgesia associated with inflammatory and neuropathic pain. This chain is G-protein coupled receptor 55 (Gpr55), found in Mus musculus (Mouse).